Here is a 103-residue protein sequence, read N- to C-terminus: uncharacterized protein (103 aa).

Residues F38–V58 traverse the membrane as a helical segment.

Its subcellular location is the membrane. This is an uncharacterized protein from Arabidopsis thaliana (Mouse-ear cress).